Consider the following 225-residue polypeptide: Putative adhesin RT0816 (225 aa).

Residues 1 to 22 form the signal peptide; that stretch reads MKKLLLIAATSATILSSSISFA.

The protein is Putative adhesin RT0816 of Rickettsia typhi (strain ATCC VR-144 / Wilmington).